The primary structure comprises 677 residues: Methionine--tRNA ligase (677 aa).

The short motif at 15 to 25 (PYANGSIHLGH) is the 'HIGH' region element. Zn(2+) contacts are provided by Cys-146, Cys-149, Cys-159, and Cys-162. Positions 333–337 (KMSKS) match the 'KMSKS' region motif. Lys-336 is an ATP binding site. A tRNA-binding domain is found at 575-677 (DFAKVDLRVA…AGAKPGHQVK (103 aa)).

It belongs to the class-I aminoacyl-tRNA synthetase family. MetG type 1 subfamily. Homodimer. Requires Zn(2+) as cofactor.

It localises to the cytoplasm. It carries out the reaction tRNA(Met) + L-methionine + ATP = L-methionyl-tRNA(Met) + AMP + diphosphate. Its function is as follows. Is required not only for elongation of protein synthesis but also for the initiation of all mRNA translation through initiator tRNA(fMet) aminoacylation. This Escherichia coli O17:K52:H18 (strain UMN026 / ExPEC) protein is Methionine--tRNA ligase.